The sequence spans 241 residues: MSNFAVSLPEVIAVLPAAGIGSRMLADCPKQYLTVGGKTIIEHAIFSLLHHPRIQRVIVVIHPQDTQFSRLSVAQDPRISTVYGGDQRANSVMAGLQLAGQAEWVLVHDAARPCLHLDDLSRLLSITECSQVGGILAAPVRDTMKRAEPGIQAIAHTVDRQDLWHALTPQLFPLELLKLCLSRALREGVAVTDEASALEHCGYHPILVTGRSDNIKVTRPEDLALAEFYLTQRQSLNNDSL.

Belongs to the IspD/TarI cytidylyltransferase family. IspD subfamily. Homodimer.

It carries out the reaction 2-C-methyl-D-erythritol 4-phosphate + CTP + H(+) = 4-CDP-2-C-methyl-D-erythritol + diphosphate. Its pathway is isoprenoid biosynthesis; isopentenyl diphosphate biosynthesis via DXP pathway; isopentenyl diphosphate from 1-deoxy-D-xylulose 5-phosphate: step 2/6. Its function is as follows. Catalyzes the formation of 4-diphosphocytidyl-2-C-methyl-D-erythritol from CTP and 2-C-methyl-D-erythritol 4-phosphate (MEP). In Yersinia pseudotuberculosis serotype IB (strain PB1/+), this protein is 2-C-methyl-D-erythritol 4-phosphate cytidylyltransferase.